Consider the following 88-residue polypeptide: UPF0298 protein BC_3932 (88 aa).

It belongs to the UPF0298 family.

Its subcellular location is the cytoplasm. The protein is UPF0298 protein BC_3932 of Bacillus cereus (strain ATCC 14579 / DSM 31 / CCUG 7414 / JCM 2152 / NBRC 15305 / NCIMB 9373 / NCTC 2599 / NRRL B-3711).